We begin with the raw amino-acid sequence, 237 residues long: Ankyrin repeat protein 14 (237 aa).

ANK repeat units lie at residues Arg-27–Ile-56 and Asn-60–Cys-90.

Its function is as follows. May be involved in virus-host protein interaction through the ankyrin repeats. This chain is Ankyrin repeat protein 14, found in Vaccinia virus (strain Western Reserve) (VACV).